We begin with the raw amino-acid sequence, 59 residues long: UPF0434 protein Shew_1640 (59 aa).

This sequence belongs to the UPF0434 family.

This chain is UPF0434 protein Shew_1640, found in Shewanella loihica (strain ATCC BAA-1088 / PV-4).